The following is a 463-amino-acid chain: MSKASDAVREPLVDKNMAGSKPDQPWMVYLSTFVAVCGSFAFGSCAGYSSPAQAAIRNDLSLTIAEFSLFGSLLTFGAMIGAITSGPIADLVGRKGAMRVSSAFCVVGWLAIIFAKGVVALDLGRLATGYGMGAFSYVVPIFIAEIAPKTFRGALTTLNQILICTGVSVSFIIGTLVTWRVLALIGIIPCAASFLGLFFIPESPRWLAKVGRDTEFEAALRKLRGKKADISEEAAEIQDYIETLERLPKAKMLDLFQRRYIRSVLIAFGLMVFQQFGGINGICFYTSSIFEQAGFPTRLGMIIYAVLQVVITALNAPIVDRAGRKPLLLVSATGLVIGCLIAAVSFYLKVHDMAHEAVPVLAVVGIMVYIGSFSAGMGAMPWVVMSEIFPINIKGVAGGMATLVNWFGAWAVSYTFNFLMSWSSYGTFLIYAAINALAIVFVIAIVPETKGKTLEQIQAIVNP.

A run of 12 helical transmembrane segments spans residues 26-46 (WMVY…GSCA), 69-89 (LFGS…GPIA), 103-123 (AFCV…ALDL), 126-146 (LATG…IAEI), 157-177 (TLNQ…GTLV), 181-201 (VLAL…FFIP), 264-284 (VLIA…GICF), 299-319 (LGMI…APIV), 327-347 (LLLV…VSFY), 357-377 (AVPV…SAGM), 396-416 (VAGG…SYTF), and 426-446 (GTFL…IAIV).

It belongs to the major facilitator superfamily. Sugar transporter (TC 2.A.1.1) family.

It is found in the membrane. Sugar transporter. In Arabidopsis thaliana (Mouse-ear cress), this protein is Sugar transporter ERD6-like 7.